We begin with the raw amino-acid sequence, 184 residues long: uncharacterized protein (184 aa).

It belongs to the eIF-2B alpha/beta/delta subunits family.

This is an uncharacterized protein from Rhodospirillum rubrum.